Here is a 1413-residue protein sequence, read N- to C-terminus: MAPMLSIASRSPSPALIAPHASARATGLRAPFAGNRIVGWGWGDQTKSGTDRNRASICVVLFLRVRSGEPTQAPRDPPAAVGGGGCYVRLPAPPRDRDAVLYHVCLFTLLLCFIPITALAESDIKNLFALRKAIAVGKGFLHNWFELETPPCNWSGISCVGLTVVAIDLSSTPLYVDFPSQIIAFQSLVRLNVSGCGFSGELPEAMVNLQHLQHLDLSDNQLGGPLPASLFDLKMLKVMVLDNNMFSGQLSPAIAHLQQLTVLSISTNSFSGGLPPELGSLKNLEYLDIHTNAFSGSIPASFSNLSRLLYLDANNNNLTGSIFPGIRALVNLVKLDLSSNGLVGAIPKELCQLKNLQSLILSDNELTGSIPEEIGNLKQLEVLNLLKCNLMDTVPLSIGNLEILEGLYISFNSFSGELPASVGELRNLRQLMAKSAGFTGSIPKELGNCKKLTTLVLSGNNFTGTIPEELADLVAVVLFDVEGNRLSGHIPDWIQNWSNVSSISLAQNMFDGPLPGLPLHLVSFSAESNRLSGSIPAKICQGTFLQILRLNDNNLTGSIDETFKGCKNLTELSLLDNHLHGEIPEYLALLPLVSLDLSHNNFTGMIPDRLWESSTILDISLSDNQLTGMITESIGKLLSLQSLSIDRNYLQGPLPRSIGALRNLTALSLSGNMLSEDIPIQLFNCRNLVTLDLSCNNLTGHIPKAISHLTKLNTLVLSRNRLSGAIPSELCVAFSRESHSELEYVQHIGLIDLSRNRLTGHIPRAINNCSILVELHLQDNLLSGTIPVELAELRNITTIDLSSNALVGPVLPWPVPLASLQGLLLSNNRLSGSIPSGIGNILPQITMLDLSGNALTGTLPLDLLCKESLNHLDVSDNNISGQIPFSCHEDKESPIPLIFFNASSNHFSGSLDESISNFTKLTYLDLHNNSLTGRLPSAIARVTSLYYLDLSSNDFSGTIPCGICGMFGLTFANFSGNRDGGTFTLADCAAEEGGVCAANRVDRKMPDHPFHVLEATICCIATAIVIVLVVILVVYLRRRRKMLRRRQFVLVPAGDNAMADHETTLSNNLLGRRRMKKREPPSINLATFEHAPVRVTVDEIMRATGNFDGMHVVGDGGFGTVYRAELPGGRRVAVKRLHGVGRRFQGGEREFRAEMETVGKVRHPNLVPLLGYCAAGDERFLVYEYMEHGSLEDRLRGGGGAALGWPERLTICGGAARGLAFLHHGFVPHVIHRDVKSSNVLLGEGLQPRVSDFGLARIISACETHVSTVLAGTLGYIPPEYALAMRCTAKGDVYSFGVVMLELLTGRPPTWSSAEVTAEGDDERGGGGSLVGWVRWMAARGRGGEVFDACLPVSGAEREQMARVLDVARDCTADEPWRRPTMAEVARRVGAIEAMEYGPLVVAVSSGEPPAMP.

The N-terminal stretch at 1-23 is a signal peptide; that stretch reads MAPMLSIASRSPSPALIAPHASA. Residues Asn-153 and Asn-192 are each glycosylated (N-linked (GlcNAc...) asparagine). LRR repeat units lie at residues 185–209, 210–233, 235–257, 258–281, 282–304, 306–329, 330–353, 354–377, 379–401, 402–425, 427–449, 450–473, 475–497, 498–518, 519–542, 543–565, 567–589, 590–613, 615–636, 637–661, 662–685, 687–709, 710–733, 745–769, 771–793, 794–817, 818–841, 843–866, and 868–890; these read FQSLVRLNVSGCGFSGELPEAMVNL, QHLQHLDLSDNQLGGPLPASLFDL, MLKVMVLDNNMFSGQLSPAIAHL, QQLTVLSISTNSFSGGLPPELGSL, KNLEYLDIHTNAFSGSIPASFSN, SRLLYLDANNNNLTGSIFPGIRAL, VNLVKLDLSSNGLVGAIPKELCQL, KNLQSLILSDNELTGSIPEEIGNL, QLEVLNLLKCNLMDTVPLSIGNL, EILEGLYISFNSFSGELPASVGEL, NLRQLMAKSAGFTGSIPKELGNC, KKLTTLVLSGNNFTGTIPEELADL, AVVLFDVEGNRLSGHIPDWIQNW, SNVSSISLAQNMFDGPLPGLP, LHLVSFSAESNRLSGSIPAKICQG, TFLQILRLNDNNLTGSIDETFKG, KNLTELSLLDNHLHGEIPEYLAL, LPLVSLDLSHNNFTGMIPDRLWES, TILDISLSDNQLTGMITESIGK, LLSLQSLSIDRNYLQGPLPRSIGAL, RNLTALSLSGNMLSEDIPIQLFNC, NLVTLDLSCNNLTGHIPKAISHL, TKLNTLVLSRNRLSGAIPSELCVA, VQHIGLIDLSRNRLTGHIPRAINNC, ILVELHLQDNLLSGTIPVELAEL, RNITTIDLSSNALVGPVLPWPVPL, ASLQGLLLSNNRLSGSIPSGIGNI, PQITMLDLSGNALTGTLPLDLLCK, and SLNHLDVSDNNISGQIPFSCHED. N-linked (GlcNAc...) asparagine glycans are attached at residues Asn-304 and Asn-317. Asn-461, Asn-496, and Asn-499 each carry an N-linked (GlcNAc...) asparagine glycan. N-linked (GlcNAc...) asparagine glycans are attached at residues Asn-554, Asn-568, and Asn-601. Residues Asn-663 and Asn-697 are each glycosylated (N-linked (GlcNAc...) asparagine). Residue Asn-768 is glycosylated (N-linked (GlcNAc...) asparagine). The N-linked (GlcNAc...) asparagine glycan is linked to Asn-795. Residues Asn-878, Asn-901, Asn-917, and Asn-928 are each glycosylated (N-linked (GlcNAc...) asparagine). 2 LRR repeats span residues 918–942 and 944–966; these read FTKLTYLDLHNNSLTGRLPSAIARV and SLYYLDLSSNDFSGTIPCGICGM. An N-linked (GlcNAc...) asparagine glycan is attached at Asn-973. A helical transmembrane segment spans residues 1016-1036; sequence TICCIATAIVIVLVVILVVYL. The Protein kinase domain maps to 1107-1401; it reads FDGMHVVGDG…IEAMEYGPLV (295 aa). Residues 1113 to 1121 and Lys-1135 contribute to the ATP site; that span reads VGDGGFGTV. Asp-1234 (proton acceptor) is an active-site residue.

Belongs to the protein kinase superfamily. Ser/Thr protein kinase family. As to expression, expressed in roots, leaves, shoots and spikelets.

It localises to the cell membrane. It catalyses the reaction L-seryl-[protein] + ATP = O-phospho-L-seryl-[protein] + ADP + H(+). It carries out the reaction L-threonyl-[protein] + ATP = O-phospho-L-threonyl-[protein] + ADP + H(+). Functionally, receptor-like kinase that may play a role male and female sporogenesis. This is Leucine-rich repeat receptor protein kinase MSL1 from Oryza sativa subsp. japonica (Rice).